A 121-amino-acid chain; its full sequence is Nitrogenase-stabilizing/protective protein NifW (121 aa).

The protein belongs to the NifW family. As to quaternary structure, homotrimer; associates with NifD.

May protect the nitrogenase Fe-Mo protein from oxidative damage. The protein is Nitrogenase-stabilizing/protective protein NifW of Methylacidiphilum infernorum (isolate V4) (Methylokorus infernorum (strain V4)).